A 74-amino-acid chain; its full sequence is Translational regulator CsrA (74 aa).

It belongs to the CsrA/RsmA family. As to quaternary structure, homodimer. The beta-strands of each monomer intercalate to form a hydrophobic core while the alpha-helices form wings that extend away from the core. Two molecules of FliW interact with 1 homodimer. mRNA and FliW bind to different sites on CsrA.

It localises to the cytoplasm. A translational regulator that binds mRNA to regulate translation initiation and/or mRNA stability. Usually binds in the 5'-UTR at or near the Shine-Dalgarno sequence preventing ribosome-binding, thus repressing translation. Represses expression of flagellin (hag) in a post-transcriptional fashion. Specifically binds to 2 sites in the 5'-UTR of hag mRNA in a cooperative fashion; the second site overlaps the Shine-Dalgarno sequence and prevents 30S ribosomal subunit binding. Mutation of either binding site abolishes CsrA regulation of hag expression. Repression is greater in the 1A96 than 168 genetic background and higher in minimal than rich medium. Translation repression is antagonized by FliW. Partner switching by flagellin between FliW and CsrA provides a flagellar assembly checkpoint to tightly control the timing of flagellin synthesis. Flagellin binds to assembly factor FliW, freeing CsrA to repress translation of the flagellin mRNA. When the flagellar hook is assembled flagellin is secreted, depleting intracellular flagellin, which frees FliW to interact with CsrA and inhibits CsrA binding to mRNA. This derepresses flagellin translation and provides protein for flagellar assembly. Once the flagellar filament is completed cytoplasmic flagellin levels rise and CsrA translation repression of flagellin reinitiates. Overexpression leads to a dramatic reduction in motility, a significant reduction in flagellin synthesis and reduced flagella assembly. The polypeptide is Translational regulator CsrA (Bacillus subtilis (strain 168)).